Reading from the N-terminus, the 335-residue chain is Cell division protein ZipA (335 aa).

Residues M1–N4 are Periplasmic-facing. The helical transmembrane segment at A5–S25 threads the bilayer. Residues N26 to S335 are Cytoplasmic-facing.

It belongs to the ZipA family. As to quaternary structure, interacts with FtsZ via their C-terminal domains.

It localises to the cell inner membrane. In terms of biological role, essential cell division protein that stabilizes the FtsZ protofilaments by cross-linking them and that serves as a cytoplasmic membrane anchor for the Z ring. Also required for the recruitment to the septal ring of downstream cell division proteins. In Histophilus somni (strain 129Pt) (Haemophilus somnus), this protein is Cell division protein ZipA.